Consider the following 143-residue polypeptide: Large ribosomal subunit protein uL11 (143 aa).

This sequence belongs to the universal ribosomal protein uL11 family. In terms of assembly, part of the ribosomal stalk of the 50S ribosomal subunit. Interacts with L10 and the large rRNA to form the base of the stalk. L10 forms an elongated spine to which L12 dimers bind in a sequential fashion forming a multimeric L10(L12)X complex. One or more lysine residues are methylated.

Functionally, forms part of the ribosomal stalk which helps the ribosome interact with GTP-bound translation factors. The sequence is that of Large ribosomal subunit protein uL11 from Psychrobacter sp. (strain PRwf-1).